Reading from the N-terminus, the 289-residue chain is Nucleotide-binding protein LAF_0356 (289 aa).

12-19 lines the ATP pocket; it reads GMSGAGKT. 62–65 is a GTP binding site; it reads DSRS.

This sequence belongs to the RapZ-like family.

Its function is as follows. Displays ATPase and GTPase activities. The polypeptide is Nucleotide-binding protein LAF_0356 (Limosilactobacillus fermentum (strain NBRC 3956 / LMG 18251) (Lactobacillus fermentum)).